A 184-amino-acid polypeptide reads, in one-letter code: NADH-quinone oxidoreductase subunit B (184 aa).

4 residues coordinate [4Fe-4S] cluster: Cys-37, Cys-38, Cys-103, and Cys-132.

The protein belongs to the complex I 20 kDa subunit family. As to quaternary structure, NDH-1 is composed of 14 different subunits. Subunits NuoB, C, D, E, F, and G constitute the peripheral sector of the complex. Requires [4Fe-4S] cluster as cofactor.

The protein resides in the cell membrane. It catalyses the reaction a quinone + NADH + 5 H(+)(in) = a quinol + NAD(+) + 4 H(+)(out). NDH-1 shuttles electrons from NADH, via FMN and iron-sulfur (Fe-S) centers, to quinones in the respiratory chain. The immediate electron acceptor for the enzyme in this species is believed to be a menaquinone. Couples the redox reaction to proton translocation (for every two electrons transferred, four hydrogen ions are translocated across the cytoplasmic membrane), and thus conserves the redox energy in a proton gradient. The polypeptide is NADH-quinone oxidoreductase subunit B (Rhodococcus erythropolis (strain PR4 / NBRC 100887)).